The sequence spans 454 residues: Maintenance of mitochondrial morphology protein 1 (454 aa).

Residues 1–128 lie on the Lumenal side of the membrane; it reads MSMVIGIGDL…QSSGWGFAHG (128 aa). A helical membrane pass occupies residues 129-149; the sequence is LLVGQLSVVAVLAFFIKFFIF. Topologically, residues 150 to 454 are cytoplasmic; sequence GNSSMARPLM…SESETAVDSN (305 aa). Positions 207-430 constitute an SMP-LTD domain; sequence QSESLDWFNV…EPRFQLIELP (224 aa).

Belongs to the MMM1 family. In terms of assembly, homodimer. Component of the ER-mitochondria encounter structure (ERMES) or MDM complex, composed of MMM1, MDM10, MDM12 and MDM34. An MMM1 homodimer associates with one molecule of MDM12 on each side in a pairwise head-to-tail manner, and the SMP-LTD domains of MMM1 and MDM12 generate a continuous hydrophobic tunnel for phospholipid trafficking.

The protein localises to the endoplasmic reticulum membrane. In terms of biological role, component of the ERMES/MDM complex, which serves as a molecular tether to connect the endoplasmic reticulum (ER) and mitochondria. Components of this complex are involved in the control of mitochondrial shape and protein biogenesis, and function in nonvesicular lipid trafficking between the ER and mitochondria. The MDM12-MMM1 subcomplex functions in the major beta-barrel assembly pathway that is responsible for biogenesis of all outer membrane beta-barrel proteins, and acts in a late step after the SAM complex. The MDM10-MDM12-MMM1 subcomplex further acts in the TOM40-specific pathway after the action of the MDM12-MMM1 complex. Essential for establishing and maintaining the structure of mitochondria and maintenance of mtDNA nucleoids. The protein is Maintenance of mitochondrial morphology protein 1 of Komagataella phaffii (strain GS115 / ATCC 20864) (Yeast).